A 505-amino-acid chain; its full sequence is Maturase K (505 aa).

The protein belongs to the intron maturase 2 family. MatK subfamily.

It localises to the plastid. The protein localises to the chloroplast. Its function is as follows. Usually encoded in the trnK tRNA gene intron. Probably assists in splicing its own and other chloroplast group II introns. In Gomphrena pulchella (Globe amaranth), this protein is Maturase K.